The primary structure comprises 290 residues: PIH1 domain-containing protein 1 (290 aa).

Residues 34-50 (ELQQAQTSRPESTQIQP) show a composition bias toward polar residues. Residues 34–53 (ELQQAQTSRPESTQIQPQPG) are disordered. Ser173 is subject to Phosphoserine.

Belongs to the PIH1 family. In terms of assembly, component of the R2TP complex composed at least of RUVBL1, RUVBL2, RPAP3 and PIHD1. Component of the PAQosome complex which is responsible for the biogenesis of several protein complexes and which consists of R2TP complex members RUVBL1, RUVBL2, RPAP3 and PIH1D1, URI complex members PFDN2, PFDN6, PDRG1, UXT and URI1 as well as ASDURF, POLR2E and DNAAF10/WDR92. Interacts with phosphorylated TELO2 and mediates interaction of TELO2 with the R2TP complex. Interacts with phosphorylated ECD, EFTUD2/SNRP116, RPB1 and UBR5 and with RPB1 in a phosphorylation-independent manner. Interacts with the core C/D box snoRNP particle components NOP58 and FBL and with RUVBL1/TIP49. Interacts with RPAP3 and DNAAF10. Interacts with histone H4 and with SWI/SNF complex member SMARCB1/SNF5. Interacts with the mTORC1 complex member RPTOR. Interacts with MSL1.

It is found in the nucleus. Involved in the assembly of C/D box small nucleolar ribonucleoprotein (snoRNP) particles. Recruits the SWI/SNF complex to the core promoter of rRNA genes and enhances pre-rRNA transcription. Mediates interaction of TELO2 with the R2TP complex which is necessary for the stability of MTOR and SMG1. Positively regulates the assembly and activity of the mTORC1 complex. This Bos taurus (Bovine) protein is PIH1 domain-containing protein 1 (PIH1D1).